The following is a 300-amino-acid chain: Ribosomal protein L11 methyltransferase (300 aa).

The S-adenosyl-L-methionine site is built by threonine 152, glycine 173, aspartate 195, and asparagine 234.

This sequence belongs to the methyltransferase superfamily. PrmA family.

It localises to the cytoplasm. It carries out the reaction L-lysyl-[protein] + 3 S-adenosyl-L-methionine = N(6),N(6),N(6)-trimethyl-L-lysyl-[protein] + 3 S-adenosyl-L-homocysteine + 3 H(+). In terms of biological role, methylates ribosomal protein L11. The sequence is that of Ribosomal protein L11 methyltransferase from Burkholderia orbicola (strain MC0-3).